The following is a 109-amino-acid chain: Keratin, type II microfibrillar (109 aa).

The interval 1–10 (QNRQCCESNL) is linker 1. Positions 1-109 (QNRQCCESNL…RLYEEEIRVL (109 aa)) constitute an IF rod domain. The tract at residues 11 to 109 (EPLFSGYIET…RLYEEEIRVL (99 aa)) is coil 1B.

Belongs to the intermediate filament family.

Its function is as follows. Wool microfibrillar keratin. The protein is Keratin, type II microfibrillar of Ovis aries (Sheep).